Here is a 466-residue protein sequence, read N- to C-terminus: Transcription factor SOX-10 (466 aa).

The tract at residues 1–67 (MAEEQDLSEV…QQDGEADDDK (67 aa)) is disordered. Residues 23–32 (LSPGSAPSLG) are compositionally biased toward low complexity. A Phosphoserine modification is found at Ser-24. Positions 62–102 (EADDDKFPVCIREAVSQVLSGYDWTLVPMPVRVNGASKSKP) are dimerization (DIM). Positions 104 to 172 (VKRPMNAFMV…QHKKDHPDYK (69 aa)) form a DNA-binding region, HMG box. A Nuclear export signal motif is present at residues 134–145 (LSKTLGKLWRLL). Basic and acidic residues-rich tracts occupy residues 160–173 (LRMQ…DYKY) and 254–271 (ADPK…KPHI). Disordered stretches follow at residues 160 to 199 (LRMQ…EQGG), 212 to 274 (LDHR…IDFG), 354 to 375 (AQVK…QPST), and 433 to 466 (RPLY…LSRP). The tract at residues 228–310 (PEHPSGQSHG…LPPNGHPGHV (83 aa)) is transactivation domain (TAM). The interval 353–466 (KAQVKTETAG…QPVYTTLSRP (114 aa)) is transactivation domain (TAC). A compositionally biased stretch (polar residues) spans 440–466 (SDPSPSGPQSHSPTHWEQPVYTTLSRP).

As to quaternary structure, monomer. Interacts with ARMCX3 at the mitochondrial outer membrane surface. Interacts with PAX3. In terms of tissue distribution, expressed in fetal brain and in adult brain, heart, small intestine and colon.

It localises to the cytoplasm. Its subcellular location is the nucleus. The protein localises to the mitochondrion outer membrane. In terms of biological role, transcription factor that plays a central role in developing and mature glia. Specifically activates expression of myelin genes, during oligodendrocyte (OL) maturation, such as DUSP15 and MYRF, thereby playing a central role in oligodendrocyte maturation and CNS myelination. Once induced, MYRF cooperates with SOX10 to implement the myelination program. Transcriptional activator of MITF, acting synergistically with PAX3. Transcriptional activator of MBP, via binding to the gene promoter. The protein is Transcription factor SOX-10 (SOX10) of Homo sapiens (Human).